The chain runs to 368 residues: Type 2 DNA topoisomerase 6 subunit A (368 aa).

The 140-residue stretch at 9–148 (TEDEIARERL…FHMRPEESGA (140 aa)) folds into the Topo IIA-type catalytic domain. Tyrosine 103 (O-(5'-phospho-DNA)-tyrosine intermediate) is an active-site residue. Mg(2+) is bound by residues glutamate 201 and aspartate 253.

This sequence belongs to the TOP6A family. In terms of assembly, homodimer. Heterotetramer of two Top6A and two Top6B chains. Mg(2+) is required as a cofactor.

The catalysed reaction is ATP-dependent breakage, passage and rejoining of double-stranded DNA.. Relaxes both positive and negative superturns and exhibits a strong decatenase activity. This chain is Type 2 DNA topoisomerase 6 subunit A, found in Natronomonas pharaonis (strain ATCC 35678 / DSM 2160 / CIP 103997 / JCM 8858 / NBRC 14720 / NCIMB 2260 / Gabara) (Halobacterium pharaonis).